Consider the following 355-residue polypeptide: Replication-associated protein (355 aa).

One can recognise a CRESS-DNA virus Rep endonuclease domain in the interval 11–114 (LHRTANTFLT…PLALFERGTF (104 aa)). The RCR-1 signature appears at 18–21 (FLTY). E52, H60, and H62 together coordinate a divalent metal cation. The short motif at 60–62 (HLH) is the RCR-2 element. Y100 (for DNA cleavage activity) is an active-site residue. An RCR-3 motif is present at residues 100–103 (YILK). E104 is an a divalent metal cation binding site. The interval 175–187 (SANKLFPDIQEEF) is oligomerization. Residue 229 to 236 (GPTRTGKS) coordinates ATP. A transactivation region spans residues 252–270 (VDWSSYNEDAIYNIVDDIP). The Nuclear localization signal motif lies at 292-303 (KYGKKKKVQMKS).

The protein belongs to the geminiviridae Rep protein family. In terms of assembly, homooligomer. Rep binds to repeated DNA motifs (iterons). Forms the O-complex, which is a Rep-DNA complex involved in the initiation of RCR. Part of the C- and V-complexes which are RepA-Rep-DNA complexes involved in the c-sense and v-sense transcription. It depends on Mg(2+) as a cofactor. Requires Mn(2+) as cofactor.

The protein localises to the host nucleus. In terms of biological role, essential for the replication of viral ssDNA. The closed circular ssDNA genome is first converted to a superhelical dsDNA. Rep binds a specific region at the genome origin of replication. It introduces an endonucleolytic nick within the conserved sequence 5'-TAATATTAC-3' in the intergenic region of the genome present in all geminiviruses, thereby initiating the rolling circle replication (RCR). Following cleavage, binds covalently to the 5'-phosphate of DNA as a tyrosyl ester. The cleavage gives rise to a free 3'-OH that serves as a primer for the cellular DNA polymerase. The polymerase synthesizes the (+) strand DNA by rolling circle mechanism. After one round of replication, a Rep-catalyzed nucleotidyl transfer reaction releases a circular single-stranded virus genome, thereby terminating the replication. Displays origin-specific DNA cleavage, nucleotidyl transferase, ATPase and helicase activities. Acts as an inhibitor of C-sense gene transcription. In Maize streak virus genotype D (isolate Raw) (MSV), this protein is Replication-associated protein.